Here is a 150-residue protein sequence, read N- to C-terminus: D-aminoacyl-tRNA deacylase (150 aa).

Positions 140–141 (GP) match the Gly-cisPro motif, important for rejection of L-amino acids motif.

This sequence belongs to the DTD family. Homodimer.

Its subcellular location is the cytoplasm. It catalyses the reaction glycyl-tRNA(Ala) + H2O = tRNA(Ala) + glycine + H(+). The catalysed reaction is a D-aminoacyl-tRNA + H2O = a tRNA + a D-alpha-amino acid + H(+). It carries out the reaction D-tyrosyl-tRNA(Tyr) + H2O = D-tyrosine + tRNA(Tyr). In terms of biological role, an aminoacyl-tRNA editing enzyme that deacylates mischarged D-aminoacyl-tRNAs. Hydrolyzes D-tyrosyl-tRNA(Tyr) into D-tyrosine and free tRNA(Tyr). May also deacylate mischarged D-leucyl-tRNA(Leu). Also deacylates mischarged glycyl-tRNA(Ala), protecting cells against glycine mischarging by AlaRS. Acts via tRNA-based rather than protein-based catalysis; rejects L-amino acids rather than detecting D-amino acids in the active site. By recycling D-aminoacyl-tRNA to D-amino acids and free tRNA molecules, this enzyme counteracts the toxicity associated with the formation of D-aminoacyl-tRNA entities in vivo and helps enforce protein L-homochirality. The sequence is that of D-aminoacyl-tRNA deacylase from Saccharomyces cerevisiae (strain ATCC 204508 / S288c) (Baker's yeast).